The chain runs to 190 residues: Protein GrpE (190 aa).

A disordered region spans residues 1 to 33; the sequence is MSEQEKDQNNAEPQVETVEEQQAAAAAEAVEPT. Over residues 11 to 32 the composition is skewed to low complexity; sequence AEPQVETVEEQQAAAAAEAVEP.

Belongs to the GrpE family. In terms of assembly, homodimer.

Its subcellular location is the cytoplasm. In terms of biological role, participates actively in the response to hyperosmotic and heat shock by preventing the aggregation of stress-denatured proteins, in association with DnaK and GrpE. It is the nucleotide exchange factor for DnaK and may function as a thermosensor. Unfolded proteins bind initially to DnaJ; upon interaction with the DnaJ-bound protein, DnaK hydrolyzes its bound ATP, resulting in the formation of a stable complex. GrpE releases ADP from DnaK; ATP binding to DnaK triggers the release of the substrate protein, thus completing the reaction cycle. Several rounds of ATP-dependent interactions between DnaJ, DnaK and GrpE are required for fully efficient folding. The protein is Protein GrpE of Alcanivorax borkumensis (strain ATCC 700651 / DSM 11573 / NCIMB 13689 / SK2).